Reading from the N-terminus, the 163-residue chain is Ribonuclease P protein component (163 aa).

Residues 1-68 (MDEKDVATQP…GGKLLSLKGD (68 aa)) form a disordered region. Positions 8-19 (TQPQETGQNPRL) are enriched in polar residues.

It belongs to the RnpA family. As to quaternary structure, consists of a catalytic RNA component (M1 or rnpB) and a protein subunit.

The enzyme catalyses Endonucleolytic cleavage of RNA, removing 5'-extranucleotides from tRNA precursor.. In terms of biological role, RNaseP catalyzes the removal of the 5'-leader sequence from pre-tRNA to produce the mature 5'-terminus. It can also cleave other RNA substrates such as 4.5S RNA. The protein component plays an auxiliary but essential role in vivo by binding to the 5'-leader sequence and broadening the substrate specificity of the ribozyme. The chain is Ribonuclease P protein component from Thermus thermophilus (strain ATCC BAA-163 / DSM 7039 / HB27).